Consider the following 81-residue polypeptide: Protein RALF-like 6 (81 aa).

A signal peptide spans 1-29 (MAAHKKSHIRIFFVSVMIILSLFSGFGEG). Cystine bridges form between cysteine 46–cysteine 54 and cysteine 66–cysteine 72.

It belongs to the plant rapid alkalinization factor (RALF) family.

It is found in the secreted. Its function is as follows. Cell signaling peptide that may regulate plant stress, growth, and development. Mediates a rapid alkalinization of extracellular space by mediating a transient increase in the cytoplasmic Ca(2+) concentration leading to a calcium-dependent signaling events through a cell surface receptor and a concomitant activation of some intracellular mitogen-activated protein kinases. In Arabidopsis thaliana (Mouse-ear cress), this protein is Protein RALF-like 6 (RALFL6).